The chain runs to 460 residues: Adenylosuccinate lyase (460 aa).

N(6)-(1,2-dicarboxyethyl)-AMP-binding positions include 15 to 16, 88 to 90, and 120 to 121; these read RY, NHD, and TS. Residue histidine 169 is the Proton donor/acceptor of the active site. Glutamine 245 serves as a coordination point for N(6)-(1,2-dicarboxyethyl)-AMP. Residue serine 293 is the Proton donor/acceptor of the active site. Residues serine 294, 299 to 301, asparagine 307, arginine 333, and 338 to 342 each bind N(6)-(1,2-dicarboxyethyl)-AMP; these read KIN and STVLR.

The protein belongs to the lyase 1 family. Adenylosuccinate lyase subfamily. As to quaternary structure, homotetramer. Residues from neighboring subunits contribute catalytic and substrate-binding residues to each active site.

The catalysed reaction is N(6)-(1,2-dicarboxyethyl)-AMP = fumarate + AMP. It catalyses the reaction (2S)-2-[5-amino-1-(5-phospho-beta-D-ribosyl)imidazole-4-carboxamido]succinate = 5-amino-1-(5-phospho-beta-D-ribosyl)imidazole-4-carboxamide + fumarate. It functions in the pathway purine metabolism; AMP biosynthesis via de novo pathway; AMP from IMP: step 2/2. It participates in purine metabolism; IMP biosynthesis via de novo pathway; 5-amino-1-(5-phospho-D-ribosyl)imidazole-4-carboxamide from 5-amino-1-(5-phospho-D-ribosyl)imidazole-4-carboxylate: step 2/2. Catalyzes two reactions in de novo purine nucleotide biosynthesis. Catalyzes the breakdown of 5-aminoimidazole- (N-succinylocarboxamide) ribotide (SAICAR or 2-[5-amino-1-(5-phospho-beta-D-ribosyl)imidazole-4-carboxamido]succinate) to 5-aminoimidazole-4-carboxamide ribotide (AICAR or 5-amino-1-(5-phospho-beta-D-ribosyl)imidazole-4-carboxamide) and fumarate, and of adenylosuccinate (ADS or N(6)-(1,2-dicarboxyethyl)-AMP) to adenosine monophosphate (AMP) and fumarate. This Buchnera aphidicola subsp. Baizongia pistaciae (strain Bp) protein is Adenylosuccinate lyase (purB).